Reading from the N-terminus, the 445-residue chain is Phosphoglucosamine mutase (445 aa).

Ser104 functions as the Phosphoserine intermediate in the catalytic mechanism. Mg(2+)-binding residues include Ser104, Asp243, Asp245, and Asp247. Ser104 bears the Phosphoserine mark.

Belongs to the phosphohexose mutase family. The cofactor is Mg(2+). Activated by phosphorylation.

The catalysed reaction is alpha-D-glucosamine 1-phosphate = D-glucosamine 6-phosphate. Catalyzes the conversion of glucosamine-6-phosphate to glucosamine-1-phosphate. This is Phosphoglucosamine mutase from Chromobacterium violaceum (strain ATCC 12472 / DSM 30191 / JCM 1249 / CCUG 213 / NBRC 12614 / NCIMB 9131 / NCTC 9757 / MK).